We begin with the raw amino-acid sequence, 312 residues long: MTIKRKKVSVIGAGFTGATTAFLLAQKELADVVLVDIPQLENPTKGKALDMLEASPVQGFDANIIGTSDYADTADSDVVVITAGIARKPGMSRDDLVATNSKIMKSITRDIAKHSPNAIIVVLTNPVDAMTYSVFKEAGFPKERVIGQSGVLDTARFRTFIAQELNLSVKDITGFVLGGHGDDMVPLVRYSYAGGIPLETLIPKERLEAIVERTRKGGGEIVGLLGNGSAYYAPAASLVEMTEAILKDQRRVLPAIAYLEGEYGYSDLYLGVPVILGGNGIEKIIELELLADEKEALDRSVESVRNVMKVLV.

NAD(+) contacts are provided by residues 12 to 17 and Asp-36; that span reads GAGFTG. Substrate-binding residues include Arg-87 and Arg-93. Residues Asn-100 and 123 to 125 contribute to the NAD(+) site; that span reads LTN. A substrate-binding site is contributed by Asn-125. Ser-149 bears the Phosphoserine mark. Residue Arg-156 participates in substrate binding. His-180 acts as the Proton acceptor in catalysis.

Belongs to the LDH/MDH superfamily. MDH type 3 family.

It carries out the reaction (S)-malate + NAD(+) = oxaloacetate + NADH + H(+). Its function is as follows. Catalyzes the reversible oxidation of malate to oxaloacetate. This Bacillus anthracis (strain A0248) protein is Malate dehydrogenase.